The primary structure comprises 427 residues: MSELQKSFAKAKLAKLPPEAPPFSMHPPRDEDDSESASSTGTVVPSPSRQLFARSRGSTCGVIFRLLAILTHPRSNSVETLNWTDFFTQELFLIQETDSARITHHVYLTPPTNSGPLFVMHHGAGSSGLSFATCAEEIRKILPKAGILSIDARDHGQTSTYTETGEGKVELDLSLETLNRDLVFIVRETQSKMGWESLPDIVLVGHSLGGAVITDVAKKGELGPKVLAYAVLDVVEGSAMDALQSMEKYLSTRPTRFPSLASGIEWHTRSRTIRNRTSARVSVPSLLYEEAAPTDPSKPWVWRTNLAETKPFWENWFIGLSKKFLEARGGKLLLLAGTDRLDKELMIGQMQGKYQLQVFPEAGHFVQEDQPVKTAQVLVDFYKRNDRSALVLPPKVADMQASAAMKQGAEAGAVPPFGRGQGSSHKP.

The interval 1–49 (MSELQKSFAKAKLAKLPPEAPPFSMHPPRDEDDSESASSTGTVVPSPSR) is disordered. Over residues 36–49 (SASSTGTVVPSPSR) the composition is skewed to polar residues. Active-site residues include S207, D233, and H364. The disordered stretch occupies residues 402–427 (SAAMKQGAEAGAVPPFGRGQGSSHKP).

The protein belongs to the AB hydrolase superfamily.

It carries out the reaction [phosphatase 2A protein]-C-terminal L-leucine methyl ester + H2O = [phosphatase 2A protein]-C-terminal L-leucine + methanol + H(+). Its function is as follows. Demethylates proteins that have been reversibly carboxymethylated. Demethylates the phosphatase PP2A catalytic subunit. This is Protein phosphatase methylesterase 1 (ppe1) from Aspergillus oryzae (strain ATCC 42149 / RIB 40) (Yellow koji mold).